A 215-amino-acid polypeptide reads, in one-letter code: N-(5'-phosphoribosyl)anthranilate isomerase (215 aa).

This sequence belongs to the TrpF family.

It catalyses the reaction N-(5-phospho-beta-D-ribosyl)anthranilate = 1-(2-carboxyphenylamino)-1-deoxy-D-ribulose 5-phosphate. The protein operates within amino-acid biosynthesis; L-tryptophan biosynthesis; L-tryptophan from chorismate: step 3/5. The protein is N-(5'-phosphoribosyl)anthranilate isomerase of Chlorobium phaeobacteroides (strain DSM 266 / SMG 266 / 2430).